The primary structure comprises 190 residues: Dynein axonemal light chain 1 (190 aa).

Alanine 2 carries the post-translational modification N-acetylalanine. LRR repeat units lie at residues 47–69, 70–93, 95–114, and 115–138; these read LANCEKLSLSTNCIEKIANLNGL, KNLRILSLGRNNIKNLNGLEAVGD, LEELWISYNFIEKLKGIHVM, and RKLKILYISNNLVKDWAEFVKLAE. At serine 56 the chain carries Phosphoserine.

Belongs to the dynein light chain LC1-type family. In terms of assembly, interacts with ZMYND10 (via C-terminus). Interacts with DNAH5, a outer arm dynein heavy chain. Interacts with tubulin located within the A-tubule of the outer doublets in a ATP-independent manner.

The protein localises to the cytoplasm. Its subcellular location is the cytoskeleton. It localises to the cilium axoneme. In terms of biological role, part of the multisubunit axonemal ATPase complexes that generate the force for cilia motility and govern beat frequency. Component of the outer arm dynein (ODA). May be involved in a mechanosensory feedback mechanism controlling ODA activity based on external conformational cues by tethering the outer arm dynein heavy chain (DNAH5) to the microtubule within the axoneme. Important for ciliary function in the airways and for the function of the cilia that produce the nodal flow essential for the determination of the left-right asymmetry. In Rattus norvegicus (Rat), this protein is Dynein axonemal light chain 1.